A 280-amino-acid polypeptide reads, in one-letter code: Succinate dehydrogenase [ubiquinone] iron-sulfur subunit, mitochondrial (280 aa).

Residues 1–28 (MAAVVALSLRRRLPATTLGGACLQASRG) constitute a mitochondrion transit peptide. The 2Fe-2S ferredoxin-type domain occupies 40–133 (KKFAIYRWDP…VSKIYPLPHM (94 aa)). 2 positions are modified to N6-acetyllysine: K51 and K55. C93, C98, C101, and C113 together coordinate [2Fe-2S] cluster. The interval 146–218 (FYAQYKSIEP…PAVLMQAYRW (73 aa)) is interaction with SDHAF1. In terms of domain architecture, 4Fe-4S ferredoxin-type spans 176–206 (EREKLDGLYECILCACCSTSCPSYWWNGDKY). C186, C189, and C192 together coordinate [4Fe-4S] cluster. C196 contacts [3Fe-4S] cluster. W201 contributes to the a ubiquinone binding site. Positions 243 and 249 each coordinate [3Fe-4S] cluster. C253 is a [4Fe-4S] cluster binding site.

It belongs to the succinate dehydrogenase/fumarate reductase iron-sulfur protein family. In terms of assembly, component of complex II composed of four subunits: the flavoprotein (FP) SDHA, iron-sulfur protein (IP) SDHB, and a cytochrome b560 composed of SDHC and SDHD. Interacts with SDHAF1; the interaction is required for iron-sulfur cluster incorporation into SDHB. As to quaternary structure, (Microbial infection) Interacts with JC virus small t antigen. It depends on [2Fe-2S] cluster as a cofactor. The cofactor is [3Fe-4S] cluster. [4Fe-4S] cluster is required as a cofactor.

Its subcellular location is the mitochondrion inner membrane. It catalyses the reaction a quinone + succinate = fumarate + a quinol. The catalysed reaction is (R)-malate + a quinone = enol-oxaloacetate + a quinol. It carries out the reaction (S)-malate + a quinone = enol-oxaloacetate + a quinol. It participates in carbohydrate metabolism; tricarboxylic acid cycle; fumarate from succinate (eukaryal route): step 1/1. With respect to regulation, enol-oxaloacetate inhibits the succinate dehydrogenase activity. In terms of biological role, iron-sulfur protein (IP) subunit of the succinate dehydrogenase complex (mitochondrial respiratory chain complex II), responsible for transferring electrons from succinate to ubiquinone (coenzyme Q). SDH also oxidizes malate to the non-canonical enol form of oxaloacetate, enol-oxaloacetate. Enol-oxaloacetate, which is a potent inhibitor of the succinate dehydrogenase activity, is further isomerized into keto-oxaloacetate. The sequence is that of Succinate dehydrogenase [ubiquinone] iron-sulfur subunit, mitochondrial (SDHB) from Homo sapiens (Human).